Consider the following 178-residue polypeptide: Probable apo-citrate lyase phosphoribosyl-dephospho-CoA transferase (178 aa).

It belongs to the CitX family.

It catalyses the reaction apo-[citrate lyase ACP] + 2'-(5''-triphospho-alpha-D-ribosyl)-3'-dephospho-CoA = holo-[citrate lyase ACP] + diphosphate. In terms of biological role, transfers 2-(5''-triphosphoribosyl)-3'-dephosphocoenzyme-A on a serine residue to the apo-acyl carrier protein (gamma chain) of the citrate lyase to yield holo-acyl carrier protein. The chain is Probable apo-citrate lyase phosphoribosyl-dephospho-CoA transferase from Vibrio cholerae serotype O1 (strain ATCC 39541 / Classical Ogawa 395 / O395).